The primary structure comprises 245 residues: Uridylate kinase (245 aa).

20–23 contributes to the ATP binding site; that stretch reads KVSG. Gly62 provides a ligand contact to UMP. Gly63 and Arg67 together coordinate ATP. Residues Asp81 and 142-149 contribute to the UMP site; that span reads IGSPFFTT. ATP is bound by residues Thr169, Gln170, Tyr175, and Asp178.

This sequence belongs to the UMP kinase family. As to quaternary structure, homohexamer.

The protein localises to the cytoplasm. It carries out the reaction UMP + ATP = UDP + ADP. It participates in pyrimidine metabolism; CTP biosynthesis via de novo pathway; UDP from UMP (UMPK route): step 1/1. With respect to regulation, inhibited by UTP. Functionally, catalyzes the reversible phosphorylation of UMP to UDP. The protein is Uridylate kinase of Anaplasma marginale (strain St. Maries).